We begin with the raw amino-acid sequence, 253 residues long: Indole-3-glycerol phosphate synthase (253 aa).

This sequence belongs to the TrpC family.

It catalyses the reaction 1-(2-carboxyphenylamino)-1-deoxy-D-ribulose 5-phosphate + H(+) = (1S,2R)-1-C-(indol-3-yl)glycerol 3-phosphate + CO2 + H2O. It functions in the pathway amino-acid biosynthesis; L-tryptophan biosynthesis; L-tryptophan from chorismate: step 4/5. The sequence is that of Indole-3-glycerol phosphate synthase from Bacillus anthracis (strain A0248).